Consider the following 346-residue polypeptide: Holliday junction branch migration complex subunit RuvB (346 aa).

Residues 1 to 182 (MSEPARLISP…FGIPVRLSFY (182 aa)) are large ATPase domain (RuvB-L). Residues Leu21, Arg22, Gly63, Lys66, Thr67, Thr68, 129–131 (EDF), Arg172, Tyr182, and Arg219 contribute to the ATP site. Thr67 provides a ligand contact to Mg(2+). The tract at residues 183 to 253 (TVEELELIVR…IADEALTRLL (71 aa)) is small ATPAse domain (RuvB-S). Residues 256-346 (NVGFDQLDKR…AQFRLFQEDN (91 aa)) form a head domain (RuvB-H) region. DNA-binding residues include Arg292, Arg311, and Arg316.

It belongs to the RuvB family. Homohexamer. Forms an RuvA(8)-RuvB(12)-Holliday junction (HJ) complex. HJ DNA is sandwiched between 2 RuvA tetramers; dsDNA enters through RuvA and exits via RuvB. An RuvB hexamer assembles on each DNA strand where it exits the tetramer. Each RuvB hexamer is contacted by two RuvA subunits (via domain III) on 2 adjacent RuvB subunits; this complex drives branch migration. In the full resolvosome a probable DNA-RuvA(4)-RuvB(12)-RuvC(2) complex forms which resolves the HJ.

The protein resides in the cytoplasm. It carries out the reaction ATP + H2O = ADP + phosphate + H(+). Functionally, the RuvA-RuvB-RuvC complex processes Holliday junction (HJ) DNA during genetic recombination and DNA repair, while the RuvA-RuvB complex plays an important role in the rescue of blocked DNA replication forks via replication fork reversal (RFR). RuvA specifically binds to HJ cruciform DNA, conferring on it an open structure. The RuvB hexamer acts as an ATP-dependent pump, pulling dsDNA into and through the RuvAB complex. RuvB forms 2 homohexamers on either side of HJ DNA bound by 1 or 2 RuvA tetramers; 4 subunits per hexamer contact DNA at a time. Coordinated motions by a converter formed by DNA-disengaged RuvB subunits stimulates ATP hydrolysis and nucleotide exchange. Immobilization of the converter enables RuvB to convert the ATP-contained energy into a lever motion, pulling 2 nucleotides of DNA out of the RuvA tetramer per ATP hydrolyzed, thus driving DNA branch migration. The RuvB motors rotate together with the DNA substrate, which together with the progressing nucleotide cycle form the mechanistic basis for DNA recombination by continuous HJ branch migration. Branch migration allows RuvC to scan DNA until it finds its consensus sequence, where it cleaves and resolves cruciform DNA. The sequence is that of Holliday junction branch migration complex subunit RuvB from Rhizobium leguminosarum bv. trifolii (strain WSM2304).